The sequence spans 214 residues: U3 small nucleolar RNA-associated protein 16 (214 aa).

Basic and acidic residues predominate over residues 1–10; that stretch reads MSNGHVKFDA. The tract at residues 1 to 106 is disordered; that stretch reads MSNGHVKFDA…KSVNETEVTD (106 aa). Ser-16 is modified (phosphoserine). Residues 22–41 show a composition bias toward basic and acidic residues; the sequence is DRQDDVLVISKKDKEVHSSS. A compositionally biased stretch (acidic residues) spans 42–52; the sequence is DEESDDDDAPQ. Phosphoserine is present on residues Ser-45, Ser-65, and Ser-144. A compositionally biased stretch (basic and acidic residues) spans 54–75; that stretch reads EGLHSGKSEVESQITQREEAIR. The tract at residues 182–214 is disordered; sequence STTQDSKTLPPKKESSIIRSKDRWLNRKALNKG. Residues 192-206 show a composition bias toward basic and acidic residues; it reads PKKESSIIRSKDRWL.

It belongs to the UTP16 family. In terms of assembly, part of the small subunit (SSU) processome composed of at least 40 protein subunits and the RNA chaperone small nucleolar RNA (snoRNA) U3. Interacts with snoRNA U3. Interacts with MPP10.

It localises to the nucleus. It is found in the nucleolus. Functions as part of the small subunit (SSU) processome, first precursor of the small eukaryotic ribosomal subunit that coordinates the first two steps of ribosome biogenesis in transcription of the primary transcript pre-RNA and pre-18S processing. During the assembly of the SSU processome in the nucleolus, many ribosome biogenesis factors, an RNA chaperone and ribosomal proteins associate with the nascent pre-rRNA and work in concert to generate RNA folding, modifications, rearrangements and cleavage as well as targeted degradation of pre-ribosomal RNA by the RNA exosome. Has a role in bud site selection maybe via the regulation of expression of bipolar budding components. The protein is U3 small nucleolar RNA-associated protein 16 (BUD21) of Saccharomyces cerevisiae (strain ATCC 204508 / S288c) (Baker's yeast).